A 433-amino-acid polypeptide reads, in one-letter code: Serine--tRNA ligase (433 aa).

Thr-235 to Glu-237 is an L-serine binding site. Arg-266–Glu-268 lines the ATP pocket. Glu-289 lines the L-serine pocket. Glu-353–Ser-356 contributes to the ATP binding site. Position 388 (Ser-388) interacts with L-serine.

Belongs to the class-II aminoacyl-tRNA synthetase family. Type-1 seryl-tRNA synthetase subfamily. As to quaternary structure, homodimer. The tRNA molecule binds across the dimer.

Its subcellular location is the cytoplasm. The catalysed reaction is tRNA(Ser) + L-serine + ATP = L-seryl-tRNA(Ser) + AMP + diphosphate + H(+). It catalyses the reaction tRNA(Sec) + L-serine + ATP = L-seryl-tRNA(Sec) + AMP + diphosphate + H(+). The protein operates within aminoacyl-tRNA biosynthesis; selenocysteinyl-tRNA(Sec) biosynthesis; L-seryl-tRNA(Sec) from L-serine and tRNA(Sec): step 1/1. In terms of biological role, catalyzes the attachment of serine to tRNA(Ser). Is also able to aminoacylate tRNA(Sec) with serine, to form the misacylated tRNA L-seryl-tRNA(Sec), which will be further converted into selenocysteinyl-tRNA(Sec). The sequence is that of Serine--tRNA ligase from Burkholderia vietnamiensis (strain G4 / LMG 22486) (Burkholderia cepacia (strain R1808)).